A 259-amino-acid polypeptide reads, in one-letter code: MGNQQVVSITGAGSGIGLELVRSFKSAGYYVSALVRNEEQEALLCKEFKDALEIVVGDVRDHATNEKLIKQTIDRFGHLDCFIANAGIWDYMLSIEEPWEKISSSFDEIFDINVKSYFSGISAALPELKKTNGSVVMTASVSSHAVGGGGSCYIASKHAVLGMVKALAYELAPEVRVNAVSPGGTVTSLCGSASAGFDKMHMKDMPGIDDMIKGLTPLGFAAKPEDVVAPYLLLASRKQGKFITGTVISIDGGMALGRK.

Ser8–Ser32 serves as a coordination point for NAD(+). Position 140 (Ser140) interacts with substrate. Tyr153 functions as the Proton acceptor in the catalytic mechanism.

It belongs to the short-chain dehydrogenases/reductases (SDR) family.

The enzyme catalyses (1R,2S)-1,2-dihydronaphthalene-1,2-diol + NAD(+) = naphthalene-1,2-diol + NADH + H(+). It catalyses the reaction cis-1,2-dihydroxy-1,2-dihydrodibenzothiophene + NAD(+) = 1,2-dihydroxydibenzothiophene + NADH + H(+). Its pathway is aromatic compound metabolism; naphthalene degradation. In terms of biological role, catalyzes the oxidation of naphthalene dihydrodiol into 1,2-dihydroxynaphthalene. The polypeptide is 1,2-dihydroxy-1,2-dihydronaphthalene dehydrogenase (nahB) (Pseudomonas putida (Arthrobacter siderocapsulatus)).